The following is a 431-amino-acid chain: Tyrosine--tRNA ligase (431 aa).

Position 33 (Y33) interacts with L-tyrosine. A 'HIGH' region motif is present at residues 38-47 (PTADSLHIGS). L-tyrosine contacts are provided by Y172 and Q176. The 'KMSKS' region motif lies at 234–238 (KFGKS). K237 contacts ATP. An S4 RNA-binding domain is found at 364-431 (LDIVTVLNEK…KKNYFVIRVV (68 aa)).

Belongs to the class-I aminoacyl-tRNA synthetase family. TyrS type 1 subfamily. As to quaternary structure, homodimer.

Its subcellular location is the cytoplasm. It catalyses the reaction tRNA(Tyr) + L-tyrosine + ATP = L-tyrosyl-tRNA(Tyr) + AMP + diphosphate + H(+). Its function is as follows. Catalyzes the attachment of tyrosine to tRNA(Tyr) in a two-step reaction: tyrosine is first activated by ATP to form Tyr-AMP and then transferred to the acceptor end of tRNA(Tyr). The chain is Tyrosine--tRNA ligase from Flavobacterium johnsoniae (strain ATCC 17061 / DSM 2064 / JCM 8514 / BCRC 14874 / CCUG 350202 / NBRC 14942 / NCIMB 11054 / UW101) (Cytophaga johnsonae).